Consider the following 52-residue polypeptide: Transmembrane protein ORF52 (52 aa).

A run of 2 helical transmembrane segments spans residues 11-31 and 32-52; these read AFLG…EIIT and FMAL…GLFV.

The protein resides in the host membrane. The sequence is that of Transmembrane protein ORF52 from Acidianus filamentous virus 1 (isolate United States/Yellowstone) (AFV-1).